The sequence spans 270 residues: Orotidine 5'-phosphate decarboxylase (270 aa).

Substrate contacts are provided by residues D43, K65 to H67, D96 to T105, Y217, and R236. Catalysis depends on K98, which acts as the Proton donor.

This sequence belongs to the OMP decarboxylase family.

It catalyses the reaction orotidine 5'-phosphate + H(+) = UMP + CO2. It participates in pyrimidine metabolism; UMP biosynthesis via de novo pathway; UMP from orotate: step 2/2. In Aureobasidium pullulans (Black yeast), this protein is Orotidine 5'-phosphate decarboxylase (URA3).